The following is a 102-amino-acid chain: Small ribosomal subunit protein uS10 (102 aa).

This sequence belongs to the universal ribosomal protein uS10 family. Part of the 30S ribosomal subunit.

Its function is as follows. Involved in the binding of tRNA to the ribosomes. The polypeptide is Small ribosomal subunit protein uS10 (Methanothrix thermoacetophila (strain DSM 6194 / JCM 14653 / NBRC 101360 / PT) (Methanosaeta thermophila)).